The primary structure comprises 397 residues: Metal tolerance protein 4 (397 aa).

Positions 1–19 (MEAKGENDARAPLLAERRR) are enriched in basic and acidic residues. A disordered region spans residues 1–27 (MEAKGENDARAPLLAERRRNSVGSMRG). Over 1-104 (MEAKGENDAR…EQKQSEFAMK (104 aa)) the chain is Cytoplasmic. Residues 105–122 (ISNYANMILLALKIYATI) form a helical membrane-spanning segment. Over 123 to 126 (KSGS) the chain is Vacuolar. Residues 127 to 147 (IAIAASTLDSLLDLMAGGILW) form a helical membrane-spanning segment. Topologically, residues 148 to 170 (FTHLSMKSINVYKYPIGKLRVQP) are cytoplasmic. A helical membrane pass occupies residues 171 to 191 (VGIIIFAAVMATLGFQVFVQA). Residues 192–208 (VEKLIVNETPDKLTPVQ) lie on the Vacuolar side of the membrane. A helical membrane pass occupies residues 209–229 (LTWLYSIMIFATVVKLALWLY). The Cytoplasmic segment spans residues 230 to 248 (CRTSGNKIVRAYAKDHYFD). A helical transmembrane segment spans residues 249 to 269 (VVTNVVGLAAAVLGDMFYWWI). Position 270 (D270) is a topological domain, vacuolar. A helical transmembrane segment spans residues 271–291 (PVGAIALAVYTITNWSGTVWE). Topologically, residues 292 to 397 (NAVSLVGESA…ILSKLPSSQP (106 aa)) are cytoplasmic.

The protein belongs to the cation diffusion facilitator (CDF) transporter (TC 2.A.4) family. SLC30A subfamily.

It is found in the vacuole membrane. In terms of biological role, involved in sequestration of excess metal in the cytoplasm into vacuoles to maintain metal homeostasis. The polypeptide is Metal tolerance protein 4 (MTP4) (Oryza sativa subsp. japonica (Rice)).